A 150-amino-acid chain; its full sequence is 3-dehydroquinate dehydratase (150 aa).

Y26 serves as the catalytic Proton acceptor. Substrate contacts are provided by N77, H83, and D90. H103 (proton donor) is an active-site residue. Residues 104–105 (LS) and R114 each bind substrate.

This sequence belongs to the type-II 3-dehydroquinase family. Homododecamer.

It carries out the reaction 3-dehydroquinate = 3-dehydroshikimate + H2O. Its pathway is metabolic intermediate biosynthesis; chorismate biosynthesis; chorismate from D-erythrose 4-phosphate and phosphoenolpyruvate: step 3/7. In terms of biological role, catalyzes a trans-dehydration via an enolate intermediate. This is 3-dehydroquinate dehydratase from Pseudoalteromonas translucida (strain TAC 125).